The following is a 348-amino-acid chain: NADH-quinone oxidoreductase subunit H (348 aa).

A run of 8 helical transmembrane segments spans residues 10–30 (LPFL…LVLV), 82–102 (GVFL…WAVI), 115–135 (VGLL…IMGG), 161–181 (IGFV…TTIV), 199–219 (FLDW…ISAL), 251–271 (LFFL…TILF), 287–307 (IPGV…FAIV), and 322–342 (LGWK…AAFL).

Belongs to the complex I subunit 1 family. As to quaternary structure, NDH-1 is composed of 14 different subunits. Subunits NuoA, H, J, K, L, M, N constitute the membrane sector of the complex.

The protein localises to the cell inner membrane. It carries out the reaction a quinone + NADH + 5 H(+)(in) = a quinol + NAD(+) + 4 H(+)(out). In terms of biological role, NDH-1 shuttles electrons from NADH, via FMN and iron-sulfur (Fe-S) centers, to quinones in the respiratory chain. The immediate electron acceptor for the enzyme in this species is believed to be ubiquinone. Couples the redox reaction to proton translocation (for every two electrons transferred, four hydrogen ions are translocated across the cytoplasmic membrane), and thus conserves the redox energy in a proton gradient. This subunit may bind ubiquinone. In Bartonella tribocorum (strain CIP 105476 / IBS 506), this protein is NADH-quinone oxidoreductase subunit H.